The primary structure comprises 257 residues: UPF0246 protein ASA_3634 (257 aa).

The protein belongs to the UPF0246 family.

This Aeromonas salmonicida (strain A449) protein is UPF0246 protein ASA_3634.